Consider the following 115-residue polypeptide: U3-lycotoxin-Ls1e (115 aa).

An N-terminal signal peptide occupies residues 1–20 (MKFVLLFGVLSLTLFSYSSA). Residues 21–44 (EMLDDFDQADEDELLSLIEKEEAR) constitute a propeptide that is removed on maturation. 4 disulfide bridges follow: C48–C63, C55–C72, C62–C87, and C74–C85.

The protein belongs to the neurotoxin 19 (CSTX) family. 01 subfamily. In terms of tissue distribution, expressed by the venom gland.

The protein localises to the secreted. The chain is U3-lycotoxin-Ls1e from Lycosa singoriensis (Wolf spider).